Consider the following 838-residue polypeptide: Transforming acidic coiled-coil-containing protein 3 (838 aa).

Serine 2 is subject to N-acetylserine. Phosphoserine is present on residues serine 25, serine 39, and serine 71. The tract at residues 123–227 (EADTDLLGDA…HGAEEECKAE (105 aa)) is disordered. The segment covering 132–164 (ASPAFGSGSSSESGPGALADLDCSSSSQSPGSS) has biased composition (low complexity). Serine 175 and serine 177 each carry phosphoserine. A compositionally biased stretch (basic and acidic residues) spans 204-227 (DPCRTESQHKAETPHGAEEECKAE). A phosphoserine mark is found at serine 250, serine 317, and serine 402. The segment at 311–527 (GRAMTLSPQE…LELKEESFRD (217 aa)) is disordered. A compositionally biased stretch (basic and acidic residues) spans 403 to 412 (YHLDWDKMDD). The residue at position 434 (serine 434) is a Phosphoserine. Residues 492–503 (NSASTSLPTSCP) show a composition bias toward polar residues. A necessary but not sufficient for spindle localization region spans residues 522–577 (EESFRDPAEVLGTGAEVDYLEQFGTSSFKESALRKQSLYLKFDPLLRDSPGRPVPV). Serine 558 is subject to Phosphoserine; by AURKA. Positions 569–594 (DSPGRPVPVATETSSMHGANETPSGR) are disordered. The span at 579 to 591 (TETSSMHGANETP) shows a compositional bias: polar residues. The interval 594–838 (RPREAKLVEF…DDLISKMEKI (245 aa)) is necessary but not sufficient for spindle localization. A coiled-coil region spans residues 637–837 (LQYSQKDLDA…CDDLISKMEK (201 aa)).

Belongs to the TACC family. As to quaternary structure, interacts with microtubules. Interacts with CKAP5 independently of clathrin. Interacts with CKAP5 and clathrin forming the TACC3/ch-TOG/clathrin complex located at spindle inter-microtubules bridges; TACC3 (phosphorylated at Ser-558 by AURKA) and CLTC are proposed to form a composite microtubule interaction surface. Interacts with CCDC100/CEP120. The coiled coil C-terminal region interacts with AH receptor nuclear translocator protein (ARNT) and ARNT2. Interacts with GCN5L2 and PCAF.

The protein localises to the cytoplasm. It localises to the cytoskeleton. The protein resides in the microtubule organizing center. It is found in the centrosome. Its subcellular location is the spindle. The protein localises to the spindle pole. In terms of biological role, plays a role in the microtubule-dependent coupling of the nucleus and the centrosome. Involved in the processes that regulate centrosome-mediated interkinetic nuclear migration (INM) of neural progenitors. Acts as a component of the TACC3/ch-TOG/clathrin complex proposed to contribute to stabilization of kinetochore fibers of the mitotic spindle by acting as inter-microtubule bridge. The TACC3/ch-TOG/clathrin complex is required for the maintenance of kinetochore fiber tension. May be involved in the control of cell growth and differentiation. May contribute to cancer. The sequence is that of Transforming acidic coiled-coil-containing protein 3 (TACC3) from Homo sapiens (Human).